The following is a 227-amino-acid chain: Large ribosomal subunit protein uL3 (227 aa).

Residues 144–166 (RRGPMAHGSKNHRLPGSTGPGTT) form a disordered region.

This sequence belongs to the universal ribosomal protein uL3 family. In terms of assembly, part of the 50S ribosomal subunit. Forms a cluster with proteins L14 and L19.

In terms of biological role, one of the primary rRNA binding proteins, it binds directly near the 3'-end of the 23S rRNA, where it nucleates assembly of the 50S subunit. In Trichodesmium erythraeum (strain IMS101), this protein is Large ribosomal subunit protein uL3.